Reading from the N-terminus, the 162-residue chain is Sec-independent protein translocase protein TatB (162 aa).

The helical transmembrane segment at 1–21 threads the bilayer; sequence MFDIGFLEIIVIMVIALIVIG. A disordered region spans residues 86–162; the sequence is IQDEFGIDQE…ESTPESSNKS (77 aa). Polar residues predominate over residues 108-117; it reads FSGTQFNKAP. The segment covering 123–135 has biased composition (low complexity); the sequence is PTTEESPSSTPET. Positions 147–162 are enriched in polar residues; that stretch reads DVSAPSESTPESSNKS.

The protein belongs to the TatB family. As to quaternary structure, the Tat system comprises two distinct complexes: a TatABC complex, containing multiple copies of TatA, TatB and TatC subunits, and a separate TatA complex, containing only TatA subunits. Substrates initially bind to the TatABC complex, which probably triggers association of the separate TatA complex to form the active translocon.

Its subcellular location is the cell inner membrane. Functionally, part of the twin-arginine translocation (Tat) system that transports large folded proteins containing a characteristic twin-arginine motif in their signal peptide across membranes. Together with TatC, TatB is part of a receptor directly interacting with Tat signal peptides. TatB may form an oligomeric binding site that transiently accommodates folded Tat precursor proteins before their translocation. In Hydrogenovibrio crunogenus (strain DSM 25203 / XCL-2) (Thiomicrospira crunogena), this protein is Sec-independent protein translocase protein TatB.